The chain runs to 639 residues: MTTSTAAKRTKSGCWTCRLRRKKCNEGGPPCDNCEARGIHCHGYGPRPQWKDRGALEREEARKLQYQSGRGRSYSRSSSTAAAAAPKPAEGAMVTGGSSSSSRGSGSSIYVGGNGLGGAQEEQHGDNNAPFSAGTGNFEYQANPAPGISPLMSDIDLALDAHAMDPLDFNFDFSSTPSSAVDKSSSTSADSPSFTSIECSQFPIFSPELTVDTPVALFPQVAPIPPGLPGRESVPVAACTDLVISHGLLLEEMDRPVGQRHGQVMAEGEKGIELMMRCPPAPRAPRLEGQGRSAHILLFVRDWYAASSWRIWSGNIQDCQNHIDAAASLLLEHETALVGEAHRLSNMERKALAFFTVRLIWNDVLLSSTRRTVPKAEMVYRRLLLADSNSRGGDSHTTTSTTGPTTTTPLLAASTFWDLTGCEGAVLLAMLDASILSAWRLGEEASGSLSIRALVGRADKIEAVVEGEIARLSSLLPRSPEKTSSASGKPSHGRKTGPENEVTVATVHSLIFAHAILTDLHQTVSGPRASVPEIGDSISRAISSAWNLWQEQQQQGAGLGLERILAWPYCVAASLAKGDQREVFREIIARTENGDGSSSGGDVQQLKSIVEQCWATSSSNHRDWKDVVQRSNQFGVFLI.

The zn(2)-C6 fungal-type DNA-binding region spans 14–41 (CWTCRLRRKKCNEGGPPCDNCEARGIHC). Disordered stretches follow at residues 58 to 136 (REEA…AGTG) and 476 to 499 (LPRSPEKTSSASGKPSHGRKTGPE). The segment covering 68-108 (SGRGRSYSRSSSTAAAAAPKPAEGAMVTGGSSSSSRGSGSS) has biased composition (low complexity).

Its subcellular location is the nucleus. Transcription factor; part of the gene cluster that mediates the biosynthesis of the phomopsins, a group of hexapeptide mycotoxins which infects lupins and causes lupinosis disease in livestock. May play a role in the regulation of the production of phomopsins. The sequence is that of Transcription factor phomR from Diaporthe leptostromiformis (Lupinosis disease fungus).